Reading from the N-terminus, the 207-residue chain is Peptidyl-tRNA hydrolase (207 aa).

Position 14 (Tyr14) interacts with tRNA. His19 serves as the catalytic Proton acceptor. The tRNA site is built by Phe68, Asn70, and Asn116.

This sequence belongs to the PTH family. In terms of assembly, monomer.

It localises to the cytoplasm. It catalyses the reaction an N-acyl-L-alpha-aminoacyl-tRNA + H2O = an N-acyl-L-amino acid + a tRNA + H(+). In terms of biological role, hydrolyzes ribosome-free peptidyl-tRNAs (with 1 or more amino acids incorporated), which drop off the ribosome during protein synthesis, or as a result of ribosome stalling. Functionally, catalyzes the release of premature peptidyl moieties from peptidyl-tRNA molecules trapped in stalled 50S ribosomal subunits, and thus maintains levels of free tRNAs and 50S ribosomes. This chain is Peptidyl-tRNA hydrolase, found in Hyphomonas neptunium (strain ATCC 15444).